We begin with the raw amino-acid sequence, 286 residues long: tRNA dimethylallyltransferase (286 aa).

The tract at residues Asp-18–Gln-21 is interaction with substrate tRNA.

This sequence belongs to the IPP transferase family. Monomer. Mg(2+) serves as cofactor.

The catalysed reaction is adenosine(37) in tRNA + dimethylallyl diphosphate = N(6)-dimethylallyladenosine(37) in tRNA + diphosphate. Its function is as follows. Catalyzes the transfer of a dimethylallyl group onto the adenine at position 37 in tRNAs that read codons beginning with uridine, leading to the formation of N6-(dimethylallyl)adenosine (i(6)A). The polypeptide is tRNA dimethylallyltransferase (Tropheryma whipplei (strain TW08/27) (Whipple's bacillus)).